The chain runs to 540 residues: Cytochrome P450 27C1 (540 aa).

Residue cysteine 486 coordinates heme.

This sequence belongs to the cytochrome P450 family. It depends on heme as a cofactor. Following L-thyroxine, expressed in the retinal pigment epithelium (at protein level).

The protein localises to the membrane. It catalyses the reaction all-trans-retinol + 2 reduced [adrenodoxin] + O2 + 2 H(+) = all-trans-3,4-didehydroretinol + 2 oxidized [adrenodoxin] + 2 H2O. Functionally, efficiently catalyzes the conversion of all-trans retinol (also called vitamin A1, the precursor of 11-cis retinal) to 3,4-didehydroretinol (also called vitamin A2, the precursor of 11-cis 3,4-didehydroretinal). Also acts on all-trans retinal and all-trans retinoic acid. The replacement of 11-cis retinal chromophore in photopigments with 11-cis 3,4-didehydroretinal enhances sensitivity to long-wavelength light. This may improve vision in fresh water which is often turbid. This chain is Cytochrome P450 27C1 (cyp27c1), found in Danio rerio (Zebrafish).